The sequence spans 28 residues: U15-ctenitoxin-Co1a (28 aa).

2 disulfides stabilise this stretch: cysteine 3–cysteine 17 and cysteine 10–cysteine 22.

In terms of tissue distribution, expressed by the venom gland.

The protein localises to the secreted. Its function is as follows. Insecticidal neurotoxin that reversibly inhibits the N-methyl-D-aspartate (NMDA)-subtype of ionotropic glutamate receptor (GRIN) and inhibits inactivation of insect sodium channels (Nav). In vivo, is highly toxic to insects. This chain is U15-ctenitoxin-Co1a, found in Ctenus ornatus (Brazilian spider).